The primary structure comprises 138 residues: Large ribosomal subunit protein bL19 (138 aa).

This sequence belongs to the bacterial ribosomal protein bL19 family.

This protein is located at the 30S-50S ribosomal subunit interface and may play a role in the structure and function of the aminoacyl-tRNA binding site. This chain is Large ribosomal subunit protein bL19, found in Rickettsia massiliae (strain Mtu5).